Consider the following 345-residue polypeptide: uncharacterized protein (345 aa).

8 consecutive transmembrane segments (helical) span residues 9-31 (VVAF…AAFV), 84-103 (TLVA…TYLL), 116-138 (YFSL…ILYT), 148-170 (VPMQ…SGIF), 182-204 (VVFV…TIHA), 269-286 (WFFW…GVLG), 291-308 (ISHY…IAGY), and 313-335 (HGLT…VFFI).

It is found in the cell membrane. This is an uncharacterized protein from Treponema pallidum (strain Nichols).